Consider the following 458-residue polypeptide: MQVTAMDVYRLLPKTNCGKCNEASCMAFATKLIEKEVTLDDCPQLSGDERQKLENLLAPAVKEITFGPEENQVVVGGDEVLYRYELTYYNPTALVVDLPDDLPSEELLNRAQRIMELEFERTGEKLTLDAIALRNRSGSPEKFAEAAEAISKLNFPVVLCTFDVEAMKAALEVLGDQKPLLYAAREDNLGEMAELSVSYGCPLVLFSPGDLEEMKNLSRRLRSLGVTEIVLDPGTFTGEGIGDTIDNFVMIRRLAVEDGDDDFRFPIMGIPALSRLTVSDKIEANIREATVAATLMNRYADILILAGTEIWEIMPVLTLRQGLYTDPRKPQAVDPGVYEFGDVDENSPVILTTNFSLTYYTVEGDLKSGDVTAYLLVLDTEGRAVDVSLAGGQLNGPAVADLIKETGIEERVRDKVMIIPGLAAPASGEIEDDTGWRVLVGPRDSSGIPDYLDKLASE.

Residues 1-59 enclose the 4Fe-4S domain; it reads MQVTAMDVYRLLPKTNCGKCNEASCMAFATKLIEKEVTLDDCPQLSGDERQKLENLLAP. 4 residues coordinate [4Fe-4S] cluster: cysteine 17, cysteine 20, cysteine 25, and cysteine 42.

As to quaternary structure, heterodimer of delta and gamma chains. The ACDS complex is made up of alpha, epsilon, beta, gamma and delta chains with a probable stoichiometry of (alpha(2)epsilon(2))(4)-beta(8)-(gamma(1)delta(1))(8). The cofactor is corrinoid. [4Fe-4S] cluster serves as cofactor.

The catalysed reaction is 5,6,7,8-tetrahydrosarcinapterin + methyl-Co(III)-[corrinoid Fe-S protein] = 5-methyltetrahydrosarcinapterin + Co(I)-[corrinoid Fe-S protein] + H(+). Functionally, part of a complex that catalyzes the reversible cleavage of acetyl-CoA, allowing autotrophic growth from CO(2). The chain is Acetyl-CoA decarbonylase/synthase complex subunit gamma from Methanothermobacter thermautotrophicus (strain ATCC 29096 / DSM 1053 / JCM 10044 / NBRC 100330 / Delta H) (Methanobacterium thermoautotrophicum).